Consider the following 1083-residue polypeptide: Carbamoyl phosphate synthase large chain (1083 aa).

Positions 1–402 (MPRRDDIKKI…SFQKALRGLE (402 aa)) are carboxyphosphate synthetic domain. ATP is bound by residues arginine 129, arginine 169, glycine 175, glycine 176, glutamate 208, isoleucine 210, glutamate 215, glycine 241, valine 242, histidine 243, glutamine 285, and glutamate 299. The 196-residue stretch at 133–328 (KQAMDKIGLD…IAKIAAKLAV (196 aa)) folds into the ATP-grasp 1 domain. Mg(2+) is bound by residues glutamine 285, glutamate 299, and asparagine 301. Mn(2+) contacts are provided by glutamine 285, glutamate 299, and asparagine 301. Positions 403 to 557 (VGAFGFGSDP…YSTYESETEV (155 aa)) are oligomerization domain. The tract at residues 558 to 944 (PAKGDKKRVV…AFAKSQLAAG (387 aa)) is carbamoyl phosphate synthetic domain. Residues 683–878 (SSLIDELGLR…VANLATKVMA (196 aa)) form the ATP-grasp 2 domain. ATP contacts are provided by arginine 719, arginine 758, leucine 760, glutamate 765, glycine 790, valine 791, histidine 792, serine 793, glutamine 833, and glutamate 849. Residues glutamine 833, glutamate 849, and asparagine 851 each contribute to the Mg(2+) site. Mn(2+) contacts are provided by glutamine 833, glutamate 849, and asparagine 851. Residues 945–1083 (TVLPESGKIF…SLQRRYAQNV (139 aa)) form the MGS-like domain. The segment at 945 to 1083 (TVLPESGKIF…SLQRRYAQNV (139 aa)) is allosteric domain.

It belongs to the CarB family. As to quaternary structure, composed of two chains; the small (or glutamine) chain promotes the hydrolysis of glutamine to ammonia, which is used by the large (or ammonia) chain to synthesize carbamoyl phosphate. Tetramer of heterodimers (alpha,beta)4. Mg(2+) serves as cofactor. The cofactor is Mn(2+).

It carries out the reaction hydrogencarbonate + L-glutamine + 2 ATP + H2O = carbamoyl phosphate + L-glutamate + 2 ADP + phosphate + 2 H(+). It catalyses the reaction hydrogencarbonate + NH4(+) + 2 ATP = carbamoyl phosphate + 2 ADP + phosphate + 2 H(+). It participates in amino-acid biosynthesis; L-arginine biosynthesis; carbamoyl phosphate from bicarbonate: step 1/1. Its pathway is pyrimidine metabolism; UMP biosynthesis via de novo pathway; (S)-dihydroorotate from bicarbonate: step 1/3. Large subunit of the glutamine-dependent carbamoyl phosphate synthetase (CPSase). CPSase catalyzes the formation of carbamoyl phosphate from the ammonia moiety of glutamine, carbonate, and phosphate donated by ATP, constituting the first step of 2 biosynthetic pathways, one leading to arginine and/or urea and the other to pyrimidine nucleotides. The large subunit (synthetase) binds the substrates ammonia (free or transferred from glutamine from the small subunit), hydrogencarbonate and ATP and carries out an ATP-coupled ligase reaction, activating hydrogencarbonate by forming carboxy phosphate which reacts with ammonia to form carbamoyl phosphate. In Rhodopirellula baltica (strain DSM 10527 / NCIMB 13988 / SH1), this protein is Carbamoyl phosphate synthase large chain.